Here is a 390-residue protein sequence, read N- to C-terminus: NADH-quinone oxidoreductase subunit D (390 aa).

It belongs to the complex I 49 kDa subunit family. As to quaternary structure, NDH-1 is composed of 14 different subunits. Subunits NuoB, C, D, E, F, and G constitute the peripheral sector of the complex.

The protein resides in the cell inner membrane. It carries out the reaction a quinone + NADH + 5 H(+)(in) = a quinol + NAD(+) + 4 H(+)(out). NDH-1 shuttles electrons from NADH, via FMN and iron-sulfur (Fe-S) centers, to quinones in the respiratory chain. The immediate electron acceptor for the enzyme in this species is believed to be ubiquinone. Couples the redox reaction to proton translocation (for every two electrons transferred, four hydrogen ions are translocated across the cytoplasmic membrane), and thus conserves the redox energy in a proton gradient. This is NADH-quinone oxidoreductase subunit D from Trichlorobacter lovleyi (strain ATCC BAA-1151 / DSM 17278 / SZ) (Geobacter lovleyi).